Consider the following 2138-residue polypeptide: Non-reducing polyketide synthase rads2 (2138 aa).

Residues 11–249 (LIFGDQTDSW…NPLNIHALQH (239 aa)) form an N-terminal acylcarrier protein transacylase (SAT) domain region. One can recognise a Ketosynthase family 3 (KS3) domain in the interval 373-804 (SGRIAIVGMA…GGNACMLLED (432 aa)). Residues cysteine 549, histidine 684, and histidine 724 each act as for beta-ketoacyl synthase activity in the active site. The segment at 901–1184 (VFVFGGQGSH…KGVCTSFVRA (284 aa)) is malonyl-CoA:ACP transacylase (MAT) domain. Serine 992 acts as the For acyl/malonyl transferase activity in catalysis. Residues 1291 to 1437 (AQYVVQESPS…KDVQRLQADW (147 aa)) are N-terminal hotdog fold. The PKS/mFAS DH domain occupies 1291-1610 (AQYVVQESPS…FHEISNATLK (320 aa)). Residues 1303–1607 (KKIQVTFRAS…GLEFHEISNA (305 aa)) form a product template (PT) domain region. The tract at residues 1459–1610 (HGHRFQPDIF…FHEISNATLK (152 aa)) is C-terminal hotdog fold. A disordered region spans residues 1618-1666 (SKSVLKPDNAAPLKAPEKKEDATPTAPKKSADPGKEEEEEGDTATPAAV). Residues 1666–1740 (VGEFEVIIQT…DLRRAFAMAP (75 aa)) form the Carrier domain. Residue serine 1700 is modified to O-(pantetheine 4'-phosphoryl)serine. A compositionally biased stretch (low complexity) spans 1740–1771 (PSSSSSTSASESVSESLDDSSSTSRSATPSSS). Disordered regions lie at residues 1740–1781 (PSSS…GFVE) and 1807–1828 (QATK…SSPA). Residues 1860 to 2006 (ADGTGSIATY…TRRHLGAMFS (147 aa)) are thioesterase (TE) domain.

It functions in the pathway secondary metabolite biosynthesis. In terms of biological role, non-reducing polyketide synthase; part of the gene cluster that mediates the biosynthesis of radicicol, a resorcylic acid lactone (RAL) that irreversibly inhibits the HSP90 molecular chaperone, an important target for cancer chemotherapy. The cluster encodes only two apparent post-PKS enzymes, a cytochrome P450 monooxygenase (radP) and a non-heme halogenase (radH) that introduce the epoxide and the chlorine, respectively. If this cluster includes all the genes required for radicicol biosynthesis, the remaining structural features of radicicol are presumably generated by the PKSs rads1 and rads2. The C-2' ketone could arise if the R-PKS rads1 and NR-PKS rads2 each carry out four iterations, in contrast to the five iteration-three iteration split for the hypothemycin PKSs. The origin of the cis 5',6' double bond is not known. The radicicol R-PKS rads1 ER domain may catalyze either double bond isomerization or reduction in the third iteration. The polypeptide is Non-reducing polyketide synthase rads2 (Floropilus chiversii (Chaetomium chiversii)).